A 502-amino-acid chain; its full sequence is Glycerol kinase (502 aa).

Thr14 contributes to the ADP binding site. ATP-binding residues include Thr14 and Thr15. Position 14 (Thr14) interacts with sn-glycerol 3-phosphate. Arg18 contributes to the ADP binding site. Sn-glycerol 3-phosphate contacts are provided by Arg84, Glu85, Tyr136, and Asp245. Glycerol-binding residues include Arg84, Glu85, Tyr136, Asp245, and Gln246. ADP-binding residues include Thr267 and Gly314. Residues Thr267, Gly314, Gln318, and Gly415 each coordinate ATP. 2 residues coordinate ADP: Gly415 and Asn419.

Belongs to the FGGY kinase family.

It catalyses the reaction glycerol + ATP = sn-glycerol 3-phosphate + ADP + H(+). Its pathway is polyol metabolism; glycerol degradation via glycerol kinase pathway; sn-glycerol 3-phosphate from glycerol: step 1/1. With respect to regulation, inhibited by fructose 1,6-bisphosphate (FBP). Functionally, key enzyme in the regulation of glycerol uptake and metabolism. Catalyzes the phosphorylation of glycerol to yield sn-glycerol 3-phosphate. The sequence is that of Glycerol kinase from Acaryochloris marina (strain MBIC 11017).